Consider the following 306-residue polypeptide: 17-beta-hydroxysteroid dehydrogenase type 3 (306 aa).

Residue 44-73 participates in NADP(+) binding; that stretch reads GQWAVITGAGDGIGKAYSFELARHGLNVVL. S181 contacts substrate. The active-site Proton acceptor is Y194.

Belongs to the short-chain dehydrogenases/reductases (SDR) family. 17-beta-HSD 3 subfamily.

Its subcellular location is the endoplasmic reticulum. The enzyme catalyses a 17beta-hydroxy steroid + NADP(+) = a 17-oxo steroid + NADPH + H(+). It catalyses the reaction testosterone + NADP(+) = androst-4-ene-3,17-dione + NADPH + H(+). It carries out the reaction 17beta-estradiol + NADP(+) = estrone + NADPH + H(+). The catalysed reaction is 3beta-hydroxyandrost-5-en-17-one + NADPH + H(+) = androst-5-en-3beta,17beta-diol + NADP(+). The enzyme catalyses 17beta-hydroxy-5alpha-androstan-3-one + NADP(+) = 5alpha-androstan-3,17-dione + NADPH + H(+). It catalyses the reaction androsterone + NADPH + H(+) = 5alpha-androstane-3alpha,17beta-diol + NADP(+). It carries out the reaction 3beta-hydroxy-5alpha-androstan-17-one + NADPH + H(+) = 5alpha-androstane-3beta,17beta-diol + NADP(+). The catalysed reaction is androst-4-ene-3,11,17-trione + NADPH + H(+) = 17beta-hydroxyandrost-4-ene-3,11-dione + NADP(+). The enzyme catalyses 11beta-hydroxyandrost-4-ene-3,17-dione + NADPH + H(+) = 11beta,17beta-dihydroxyandrost-4-ene-3-one + NADP(+). Its pathway is hormone biosynthesis; testosterone biosynthesis. The protein operates within steroid metabolism. Catalyzes the conversion of 17-oxosteroids to 17beta-hydroxysteroids. Favors the reduction of androstenedione to testosterone. Testosterone is the key androgen driving male development and function. Uses NADPH while the two other EDH17B enzymes use NADH. Androgens such as epiandrosterone, dehydroepiandrosterone, androsterone and androstanedione are accepted as substrates and reduced at C-17. Can reduce 11-ketoandrostenedione as well as 11beta-hydroxyandrostenedione at C-17 to the respective testosterone forms. Plays a role in the rate-limiting-step for the maximum level of testosterone production by the testis but does not affect basal testosterone production. The polypeptide is 17-beta-hydroxysteroid dehydrogenase type 3 (Rattus norvegicus (Rat)).